Consider the following 150-residue polypeptide: UPF0756 membrane protein STH2648 (150 aa).

Transmembrane regions (helical) follow at residues 13–33 (ALGV…VLIL), 52–72 (AGLI…EVGW), 85–105 (LAAI…VTLL), and 111–131 (VIVG…GIPV).

This sequence belongs to the UPF0756 family.

Its subcellular location is the cell membrane. The protein is UPF0756 membrane protein STH2648 of Symbiobacterium thermophilum (strain DSM 24528 / JCM 14929 / IAM 14863 / T).